Here is a 376-residue protein sequence, read N- to C-terminus: Putative E3 ubiquitin-protein ligase XBAT34 (376 aa).

ANK repeat units lie at residues 41–71 (LGRT…NVNA) and 77–106 (NGGT…NPLV). The segment at 325–364 (CVICVDAPSEAVCVPCGHVAGCISCLKEIENKKMGCPVCR) adopts an RING-type zinc-finger fold.

It carries out the reaction S-ubiquitinyl-[E2 ubiquitin-conjugating enzyme]-L-cysteine + [acceptor protein]-L-lysine = [E2 ubiquitin-conjugating enzyme]-L-cysteine + N(6)-ubiquitinyl-[acceptor protein]-L-lysine.. It participates in protein modification; protein ubiquitination. In terms of biological role, no E3 ubiquitin-protein ligase activity observed when associated with the E2 enzyme UBC8 in vitro. This Arabidopsis thaliana (Mouse-ear cress) protein is Putative E3 ubiquitin-protein ligase XBAT34 (XBAT34).